The primary structure comprises 515 residues: 13S globulin seed storage protein (515 aa).

Residues M1–A22 form the signal peptide. The tract at residues A23–L96 is igE-binding epitope. 2 disulfides stabilise this stretch: C47–C80 and C123–C327. One can recognise a Cupin type-1 1 domain in the interval L52–S272. The interval L97–A172 is igE-binding epitope with a very strong IgE-binding activity. 3 disordered regions span residues C123–H156, L210–D241, and P295–N320. 3 stretches are compositionally biased toward basic and acidic residues: residues H141 to H156, G217 to S239, and P295 to S316. 2 igE-binding epitope regions span residues G173–A248 and N249–N320. In terms of domain architecture, Cupin type-1 2 spans Q333–Y482. Positions R347–N387 are igE-binding epitope with a strong IgE-binding activity. 3 igE-binding epitope regions span residues E407–G457, E440–I476, and D475–R511.

It belongs to the 11S seed storage protein (globulins) family. In terms of assembly, homohexamer. Post-translationally, proteolytically processed from a single precursor to produce an acidic and a basic chain that are linked by a disulfide bond. As to expression, expressed in seeds (at protein level).

Functionally, seed storage protein. This is 13S globulin seed storage protein from Fagopyrum tataricum (Tartarian buckwheat).